The following is a 410-amino-acid chain: MSSDPNFSLTSFLECLSQIEHEFLRDKVENPPVLVRKLQELQQKTPGHVASLLHDPETIQQIHQTAHRIEVAVKVFIHIDQKFTSGCSEVVHGTSKVMQEVNVGSPAVGCRNLSEDLPAYHMRKHFLLTLDSPYPTQEEKEGLVRLTNESTARVGLSNATRPPLEVHQLTLWFINARRRSGWSHILKKFAREDRSRMKRLVRAKLSSSTQSSPPSPMPEYPSNNLDNILSDNLGRPLTPADKQQFEDDWASMISWIKYGVKEKVGDWVYDLCAASKKTPKPGMPRPVTTVAKRQPARKTKPAAKPNSRTANPRASTTPSIDSTLDSSKLESTPELSMCSTADTSFSTFGSSLSMSHYNPFQDGNDILQSPTVKARGNRKVKALPKRAGKQQPDEVENGKIPFLCLSVAFV.

The tract at residues 1 to 110 is variable domain between B alleles; sequence MSSDPNFSLT…VNVGSPAVGC (110 aa). Residues 107–184 constitute a DNA-binding region (homeobox; TALE-type); the sequence is AVGCRNLSED…NARRRSGWSH (78 aa). The tract at residues 111–410 is highly conserved between B alleles; the sequence is RNLSEDLPAY…PFLCLSVAFV (300 aa). Disordered stretches follow at residues 202–225, 278–336, and 374–394; these read RAKL…SNNL, TPKP…PELS, and ARGN…QPDE. The Nuclear localization signal motif lies at 276-308; sequence KKTPKPGMPRPVTTVAKRQPARKTKPAAKPNSR. Residues 306–336 are compositionally biased toward polar residues; it reads NSRTANPRASTTPSIDSTLDSSKLESTPELS. The tract at residues 333–410 is not essential for B7 function; that stretch reads PELSMCSTAD…PFLCLSVAFV (78 aa). Positions 375–388 are enriched in basic residues; the sequence is RGNRKVKALPKRAG.

This sequence belongs to the TALE/M-ATYP homeobox family.

It localises to the nucleus. Functionally, the B locus has at least 25 alleles, and any combination of two different B alleles yields a multimeric regulatory protein, that activates genes responsible for the pathogenicity and for the sexual development of the fungus within the corn plant. This is Mating-type locus allele B7 protein from Mycosarcoma maydis (Corn smut fungus).